Here is a 482-residue protein sequence, read N- to C-terminus: tRNA sulfurtransferase (482 aa).

The THUMP domain maps to Leu61 to Arg165. Residues Leu183 to Ile184, Lys265, Gly287, and Gln296 each bind ATP. A disulfide bridge connects residues Cys344 and Cys456. The 79-residue stretch at Phe404–Pro482 folds into the Rhodanese domain. Cys456 functions as the Cysteine persulfide intermediate in the catalytic mechanism.

It belongs to the ThiI family.

The protein resides in the cytoplasm. It catalyses the reaction [ThiI sulfur-carrier protein]-S-sulfanyl-L-cysteine + a uridine in tRNA + 2 reduced [2Fe-2S]-[ferredoxin] + ATP + H(+) = [ThiI sulfur-carrier protein]-L-cysteine + a 4-thiouridine in tRNA + 2 oxidized [2Fe-2S]-[ferredoxin] + AMP + diphosphate. It carries out the reaction [ThiS sulfur-carrier protein]-C-terminal Gly-Gly-AMP + S-sulfanyl-L-cysteinyl-[cysteine desulfurase] + AH2 = [ThiS sulfur-carrier protein]-C-terminal-Gly-aminoethanethioate + L-cysteinyl-[cysteine desulfurase] + A + AMP + 2 H(+). Its pathway is cofactor biosynthesis; thiamine diphosphate biosynthesis. In terms of biological role, catalyzes the ATP-dependent transfer of a sulfur to tRNA to produce 4-thiouridine in position 8 of tRNAs, which functions as a near-UV photosensor. Also catalyzes the transfer of sulfur to the sulfur carrier protein ThiS, forming ThiS-thiocarboxylate. This is a step in the synthesis of thiazole, in the thiamine biosynthesis pathway. The sulfur is donated as persulfide by IscS. This chain is tRNA sulfurtransferase, found in Salmonella heidelberg (strain SL476).